A 77-amino-acid polypeptide reads, in one-letter code: Small ribosomal subunit protein bS16c (77 aa).

Belongs to the bacterial ribosomal protein bS16 family.

The protein localises to the plastid. It is found in the chloroplast. This Eucalyptus globulus subsp. globulus (Tasmanian blue gum) protein is Small ribosomal subunit protein bS16c.